The following is a 514-amino-acid chain: Maturase K (514 aa).

The protein belongs to the intron maturase 2 family. MatK subfamily.

The protein localises to the plastid. It is found in the chloroplast. Usually encoded in the trnK tRNA gene intron. Probably assists in splicing its own and other chloroplast group II introns. This chain is Maturase K, found in Tsuga canadensis (Eastern hemlock).